Reading from the N-terminus, the 95-residue chain is Co-chaperonin GroES (95 aa).

Belongs to the GroES chaperonin family. Heptamer of 7 subunits arranged in a ring. Interacts with the chaperonin GroEL.

It localises to the cytoplasm. Functionally, together with the chaperonin GroEL, plays an essential role in assisting protein folding. The GroEL-GroES system forms a nano-cage that allows encapsulation of the non-native substrate proteins and provides a physical environment optimized to promote and accelerate protein folding. GroES binds to the apical surface of the GroEL ring, thereby capping the opening of the GroEL channel. This Francisella tularensis subsp. holarctica (strain FTNF002-00 / FTA) protein is Co-chaperonin GroES.